The sequence spans 580 residues: PTS system fructose-specific EIIB'BC component (580 aa).

PTS EIIB type-2 domains are found at residues 3–100 and 124–221; these read MKIA…QAAE and KKIV…NAFA. Active-site phosphocysteine intermediate; for EIIB activity residues include Cys11 and Cys132. Phosphocysteine; by EIIA is present on residues Cys11 and Cys132. A PTS EIIC type-2 domain is found at 244-579; that stretch reads VYKHLMTGVS…KKSAQAKAVA (336 aa). 9 consecutive transmembrane segments (helical) span residues 254-274, 292-312, 322-342, 367-387, 408-428, 448-468, 480-500, 507-527, and 537-557; these read HMLP…VFGI, GGSA…FSIA, IGGM…VAGF, ILII…YVVG, NAIL…GGPV, MAAI…ATFI, AGKA…IPFA, VIPA…LFGA, and FVLL…AIAV.

It is found in the cell inner membrane. The enzyme catalyses D-fructose(out) + N(pros)-phospho-L-histidyl-[protein] = D-fructose 1-phosphate(in) + L-histidyl-[protein]. The phosphoenolpyruvate-dependent sugar phosphotransferase system (sugar PTS), a major carbohydrate active transport system, catalyzes the phosphorylation of incoming sugar substrates concomitantly with their translocation across the cell membrane. The enzyme II FruAB PTS system is involved in fructose transport. In Vibrio cholerae serotype O1 (strain ATCC 39315 / El Tor Inaba N16961), this protein is PTS system fructose-specific EIIB'BC component.